The chain runs to 1116 residues: Probable chitinase LysM11 (1116 aa).

The 51-residue stretch at 233–283 (GTYTIQTNDNCAEIAAHFGVTQDDIYDLNEDTWGWAGCGTNDLKADQVICL) folds into the LysM domain. The 374-residue stretch at 346 to 719 (FYHVAYFEVF…LGVDPDSDEA (374 aa)) folds into the GH18 domain. E466 acts as the Proton donor in catalysis. Residues Y467 and W701 each coordinate chitin.

This sequence belongs to the glycosyl hydrolase 18 family. Chitinase class V subfamily.

It carries out the reaction Random endo-hydrolysis of N-acetyl-beta-D-glucosaminide (1-&gt;4)-beta-linkages in chitin and chitodextrins.. Functionally, probable chitinase involved in the degradation of chitin, a component of the cell walls of fungi and exoskeletal elements of some animals (including worms and arthropods). Might be involved in manipulation of host defenses for successful infection. The sequence is that of Probable chitinase LysM11 from Penicillium expansum (Blue mold rot fungus).